The chain runs to 215 residues: MKMKSPLFRGPLVNSSTENPIHILTREKLRHQTSGTNSTEKVILPNILHSYIKNLNLDFTSPYGSTGNNEVLSILRSRFKQSIFPSSGLKCLDTTGDFLIKNVLHKRYESVQKNISNALSSSINSRTAVFFCILFSITVLMEIAPGPLLKKPSLLFSDNLPNVLQYTRDVYVNHVCIIHKSLSPCECEEPLNRIIRDMFPQTTFDPLELQKPSPQ.

It localises to the mitochondrion. This is an uncharacterized protein from Arabidopsis thaliana (Mouse-ear cress).